A 360-amino-acid polypeptide reads, in one-letter code: Histidinol-phosphate aminotransferase 2 (360 aa).

K218 is modified (N6-(pyridoxal phosphate)lysine).

Belongs to the class-II pyridoxal-phosphate-dependent aminotransferase family. Histidinol-phosphate aminotransferase subfamily. As to quaternary structure, homodimer. Pyridoxal 5'-phosphate serves as cofactor.

It catalyses the reaction L-histidinol phosphate + 2-oxoglutarate = 3-(imidazol-4-yl)-2-oxopropyl phosphate + L-glutamate. Its pathway is amino-acid biosynthesis; L-histidine biosynthesis; L-histidine from 5-phospho-alpha-D-ribose 1-diphosphate: step 7/9. The protein is Histidinol-phosphate aminotransferase 2 of Nitrosococcus oceani (strain ATCC 19707 / BCRC 17464 / JCM 30415 / NCIMB 11848 / C-107).